The sequence spans 254 residues: uncharacterized protein (254 aa).

Residues Val7 and Asn85 each contribute to the NADP(+) site. Ser136 (proton donor) is an active-site residue. Positions 150, 154, 181, and 183 each coordinate NADP(+). Catalysis depends on Tyr150, which acts as the Proton acceptor. Residue Lys154 is the Lowers pKa of active site Tyr of the active site.

Belongs to the short-chain dehydrogenases/reductases (SDR) family.

This is an uncharacterized protein from Saccharomyces cerevisiae (strain ATCC 204508 / S288c) (Baker's yeast).